We begin with the raw amino-acid sequence, 293 residues long: Heterogeneous nuclear ribonucleoprotein C-like 4 (293 aa).

The region spanning 16–87 is the RRM domain; it reads SRVFIGNLNT…QVVDINLAAE (72 aa). Disordered stretches follow at residues 140-177 and 208-293; these read VVPS…KLKG and HCKQ…QDDS. The stretch at 177-208 forms a coiled coil; the sequence is GDDLQAIKQELTQIKQKVDSLLENLEKIEKEH. 2 stretches are compositionally biased toward basic and acidic residues: residues 208 to 222 and 229 to 240; these read HCKQ…KSEE and SKKDKTHVKMES. Residues 242 to 263 are compositionally biased toward acidic residues; it reads GGADDSVEEGDLLCDDDNEDQG. Residues 269–293 are compositionally biased toward basic and acidic residues; it reads LIKDDEKGAEEGEDDRDRANGQDDS.

Belongs to the RRM HNRPC family. RALY subfamily.

It localises to the nucleus. This chain is Heterogeneous nuclear ribonucleoprotein C-like 4, found in Homo sapiens (Human).